Here is a 192-residue protein sequence, read N- to C-terminus: 7-methyl-GTP pyrophosphatase (192 aa).

D69 (proton acceptor) is an active-site residue.

Belongs to the Maf family. YceF subfamily. A divalent metal cation is required as a cofactor.

Its subcellular location is the cytoplasm. The enzyme catalyses N(7)-methyl-GTP + H2O = N(7)-methyl-GMP + diphosphate + H(+). In terms of biological role, nucleoside triphosphate pyrophosphatase that hydrolyzes 7-methyl-GTP (m(7)GTP). May have a dual role in cell division arrest and in preventing the incorporation of modified nucleotides into cellular nucleic acids. In Pseudomonas aeruginosa (strain ATCC 15692 / DSM 22644 / CIP 104116 / JCM 14847 / LMG 12228 / 1C / PRS 101 / PAO1), this protein is 7-methyl-GTP pyrophosphatase.